A 231-amino-acid polypeptide reads, in one-letter code: Ion-translocating oxidoreductase complex subunit E (231 aa).

Helical transmembrane passes span 18–38, 39–59, 63–83, 86–106, 125–145, and 182–202; these read ALVQLLGLCPLLAVTSTATNA, LGLGLATTLVLTLTNLTISTL, TPAEIRIPIYVMIIASVVSAV, LINAYAFGLYQSLGIFIPLIV, ALSALDGFSIGMGATCAMFVL, and PFLLAMLPPGAFIGLGLMLAG.

This sequence belongs to the NqrDE/RnfAE family. As to quaternary structure, the complex is composed of six subunits: RsxA, RsxB, RsxC, RsxD, RsxE and RsxG.

It is found in the cell inner membrane. Part of a membrane-bound complex that couples electron transfer with translocation of ions across the membrane. Required to maintain the reduced state of SoxR. This is Ion-translocating oxidoreductase complex subunit E from Escherichia coli (strain SE11).